Consider the following 331-residue polypeptide: Eukaryotic translation initiation factor 3 subunit I (331 aa).

WD repeat units lie at residues 8–47 (LHER…RIGS), 49–88 (QCGG…QLDS), 142–181 (SPQC…LIKT), 184–223 (DHNK…LLRT), and 281–320 (GHIG…FEFD).

This sequence belongs to the eIF-3 subunit I family. Component of the eukaryotic translation initiation factor 3 (eIF-3) complex.

Its subcellular location is the cytoplasm. In terms of biological role, component of the eukaryotic translation initiation factor 3 (eIF-3) complex, which is involved in protein synthesis of a specialized repertoire of mRNAs and, together with other initiation factors, stimulates binding of mRNA and methionyl-tRNAi to the 40S ribosome. The eIF-3 complex specifically targets and initiates translation of a subset of mRNAs involved in cell proliferation. This chain is Eukaryotic translation initiation factor 3 subunit I (eif3I), found in Dictyostelium discoideum (Social amoeba).